Reading from the N-terminus, the 442-residue chain is MEVNVVENGLFDRDITITVAAEKVDALLSQEMTKTAAQVRLPGFRAGKVPTKMIEQRFGASIRAEVAEQLFRDSYPTALMEKGLRPVGQPELDLVELEKGKPFTYTAKIQIFPVIEPKDYTGMSLTKPVVTIQDSDVETVITRVREANAEYRTQEGVAAASGDRMTFDFEGFVDGEAFEGGKAEDYVLELGSNRFIPGFEDQLIGAKGGDALEVKVTFPEDYHGTQLAGKEAIFKCVVKAIESRELPEVDEELAKKAGVQEGGVEAMKQEIHERLVKEADKVAKQEMKQQVFKLLLENNPNELPSQMVDHEIEQMVATAKEEYSRQGVDPEQLGFTDETWRNQYAEKAKERIILGLLMGSIVSKENLEIDDQAVEAHIDALVQQFAAGDYAEQLKAQLKKDKARLEEFRGAALEEKTVAWLIEQGTVTEEEKSFEELVAQRG.

The region spanning glycine 162–proline 247 is the PPIase FKBP-type domain.

The protein belongs to the FKBP-type PPIase family. Tig subfamily.

Its subcellular location is the cytoplasm. It carries out the reaction [protein]-peptidylproline (omega=180) = [protein]-peptidylproline (omega=0). Involved in protein export. Acts as a chaperone by maintaining the newly synthesized protein in an open conformation. Functions as a peptidyl-prolyl cis-trans isomerase. The polypeptide is Trigger factor (Magnetococcus marinus (strain ATCC BAA-1437 / JCM 17883 / MC-1)).